The primary structure comprises 59 residues: U-actitoxin-Aer2a (59 aa).

In terms of processing, contains 5 disulfide bonds.

The protein localises to the secreted. It localises to the nematocyst. This Anemonia erythraea (Sea anemone) protein is U-actitoxin-Aer2a.